We begin with the raw amino-acid sequence, 683 residues long: Probable metal-nicotianamine transporter YSL3 (683 aa).

Transmembrane regions (helical) follow at residues 29 to 49 (LVTP…CFVG), 58 to 78 (IVPA…KWLI), 97 to 117 (MFLL…GFAT), 142 to 162 (HVPI…GVLI), 204 to 224 (VATI…QWFY), 265 to 285 (IVNF…YPFL), 309 to 329 (VFIS…TLIT), 372 to 392 (IPIP…TIAI), 404 to 424 (LAVL…ATGL), 448 to 468 (PGAV…LHIS), 490 to 510 (TGQI…FLAF), 553 to 573 (CMTF…VVLV), 595 to 615 (FFAG…LLAW), and 628 to 648 (SAVA…SALL).

It belongs to the YSL (TC 2.A.67.2) family.

The protein localises to the membrane. In terms of biological role, may be involved in the transport of nicotianamine-chelated metals. This chain is Probable metal-nicotianamine transporter YSL3 (YSL3), found in Oryza sativa subsp. japonica (Rice).